The chain runs to 340 residues: Holliday junction branch migration complex subunit RuvB (340 aa).

The interval 4–184 is large ATPase domain (RuvB-L); the sequence is TDRIVGGQSL…FGIVQRLEFY (181 aa). ATP contacts are provided by residues R24, G65, K68, T69, T70, 131 to 133, R174, Y184, and R221; that span reads EDF. A Mg(2+)-binding site is contributed by T69. Positions 185 to 255 are small ATPAse domain (RuvB-S); it reads SIEELAQIVT…IADLALNLLE (71 aa). The segment at 258-340 is head domain (RuvB-H); sequence PLGLDKMDRR…TMPERNLEDE (83 aa). R294, R313, and R318 together coordinate DNA.

Belongs to the RuvB family. In terms of assembly, homohexamer. Forms an RuvA(8)-RuvB(12)-Holliday junction (HJ) complex. HJ DNA is sandwiched between 2 RuvA tetramers; dsDNA enters through RuvA and exits via RuvB. An RuvB hexamer assembles on each DNA strand where it exits the tetramer. Each RuvB hexamer is contacted by two RuvA subunits (via domain III) on 2 adjacent RuvB subunits; this complex drives branch migration. In the full resolvosome a probable DNA-RuvA(4)-RuvB(12)-RuvC(2) complex forms which resolves the HJ.

It is found in the cytoplasm. It catalyses the reaction ATP + H2O = ADP + phosphate + H(+). Its function is as follows. The RuvA-RuvB-RuvC complex processes Holliday junction (HJ) DNA during genetic recombination and DNA repair, while the RuvA-RuvB complex plays an important role in the rescue of blocked DNA replication forks via replication fork reversal (RFR). RuvA specifically binds to HJ cruciform DNA, conferring on it an open structure. The RuvB hexamer acts as an ATP-dependent pump, pulling dsDNA into and through the RuvAB complex. RuvB forms 2 homohexamers on either side of HJ DNA bound by 1 or 2 RuvA tetramers; 4 subunits per hexamer contact DNA at a time. Coordinated motions by a converter formed by DNA-disengaged RuvB subunits stimulates ATP hydrolysis and nucleotide exchange. Immobilization of the converter enables RuvB to convert the ATP-contained energy into a lever motion, pulling 2 nucleotides of DNA out of the RuvA tetramer per ATP hydrolyzed, thus driving DNA branch migration. The RuvB motors rotate together with the DNA substrate, which together with the progressing nucleotide cycle form the mechanistic basis for DNA recombination by continuous HJ branch migration. Branch migration allows RuvC to scan DNA until it finds its consensus sequence, where it cleaves and resolves cruciform DNA. This is Holliday junction branch migration complex subunit RuvB from Hydrogenovibrio crunogenus (strain DSM 25203 / XCL-2) (Thiomicrospira crunogena).